We begin with the raw amino-acid sequence, 382 residues long: Ribosomal RNA large subunit methyltransferase F (382 aa).

Disordered regions lie at residues 1–53 (MTKP…LHRD) and 269–288 (NRAS…KSQL). The span at 8-24 (ASRKPVTKSGRNSKRSR) shows a compositional bias: basic residues. Over residues 269 to 286 (NRASKGHKLEPKAPKDKS) the composition is skewed to basic and acidic residues.

Belongs to the methyltransferase superfamily. METTL16/RlmF family.

It localises to the cytoplasm. It carries out the reaction adenosine(1618) in 23S rRNA + S-adenosyl-L-methionine = N(6)-methyladenosine(1618) in 23S rRNA + S-adenosyl-L-homocysteine + H(+). Functionally, specifically methylates the adenine in position 1618 of 23S rRNA. The chain is Ribosomal RNA large subunit methyltransferase F from Shewanella woodyi (strain ATCC 51908 / MS32).